Consider the following 837-residue polypeptide: Amyloid-beta A4 precursor protein-binding family A member 1 (837 aa).

3 disordered regions span residues 1–93 (MNHL…DTAE), 238–342 (YDER…SKEK), and 358–435 (EEVK…ESRK). Acidic residues predominate over residues 23-38 (ESVEADLEHPEVEEEQ). Residues Ser78, Ser242, Ser246, Ser248, Ser263, Ser280, and Ser285 each carry the phosphoserine modification. The tract at residues 226–314 (YRQEALGARL…TPAGGRPDSP (89 aa)) is munc-18-1 binding. Positions 238–254 (YDERSDGESDSPEKEAE) are enriched in basic and acidic residues. Phosphothreonine is present on Thr305. Residues Ser313 and Ser367 each carry the phosphoserine modification. Thr370 is modified (phosphothreonine). The tract at residues 373-436 (EPKEPIWVMR…ASTNKESRKS (64 aa)) is LIN-2/CASK binding. The segment covering 387-398 (PTRDCDDQRPMD) has biased composition (basic and acidic residues). The span at 399–418 (GDSPSPGSSSPLGAESSSTS) shows a compositional bias: low complexity. Phosphoserine is present on residues Ser401, Ser403, Ser408, and Ser568. Residues 457-643 (DGIIFAANYL…LLNTQDMYND (187 aa)) form the PID domain. The tract at residues 626-641 (LSQKEYSDLLNTQDMY) is autoinhibitory helix linker. PDZ domains lie at 656–742 (DVFI…IVRC) and 747–822 (TVLI…TMPA).

In terms of assembly, part of a multimeric complex containing STXBP1 and STX1A. Interacts with STXBP1. Also part of the brain-specific heterotrimeric complex LIN-10/X11-alpha, LIN-2/CASK, and LIN7. Component of the brain-specific heterotrimeric complex (LIN-10-LIN-2-LIN-7 complex) composed of at least APBA1, CASK, and LIN7, which associates with the motor protein KIF17 to transport vesicles along microtubules. Within the complex, interacts (via PDZ domain) with the motor protein KIF17; the interaction is direct and is required for association of KIF17 with the cargo that is to be transported. Both isoform 1 and isoform 2 bind to the cytoplasmic domain of amyloid protein (APP). Interacts (via PDZ 1 and 2 domains) with FSPB. Isoform 2, but not isoform 1, interacts (via its truncated PID domain) with active, GTP-bound RAB6A and RAB6B. As to expression, brain and spinal cord. Isoform 2 is expressed in testis and brain, but not detected in lung, liver or spleen.

The protein localises to the cytoplasm. Its subcellular location is the perinuclear region. It localises to the nucleus. The protein resides in the golgi apparatus. In terms of biological role, putative function in synaptic vesicle exocytosis by binding to Munc18-1, an essential component of the synaptic vesicle exocytotic machinery. May modulate processing of the amyloid-beta precursor protein (APP) and hence formation of APP-beta. Component of the LIN-10-LIN-2-LIN-7 complex, which associates with the motor protein KIF17 to transport vesicles containing N-methyl-D-aspartate (NMDA) receptor subunit NR2B along microtubules. The protein is Amyloid-beta A4 precursor protein-binding family A member 1 (APBA1) of Homo sapiens (Human).